The sequence spans 250 residues: 2,3-bisphosphoglycerate-dependent phosphoglycerate mutase (250 aa).

Residues 8–15, 21–22, arginine 60, 87–90, lysine 98, 114–115, and 183–184 contribute to the substrate site; these read RHGESEWN, TG, ERHY, RR, and GN. Histidine 9 (tele-phosphohistidine intermediate) is an active-site residue. Glutamate 87 (proton donor/acceptor) is an active-site residue.

This sequence belongs to the phosphoglycerate mutase family. BPG-dependent PGAM subfamily.

It catalyses the reaction (2R)-2-phosphoglycerate = (2R)-3-phosphoglycerate. It participates in carbohydrate degradation; glycolysis; pyruvate from D-glyceraldehyde 3-phosphate: step 3/5. Functionally, catalyzes the interconversion of 2-phosphoglycerate and 3-phosphoglycerate. This chain is 2,3-bisphosphoglycerate-dependent phosphoglycerate mutase, found in Borrelia duttonii (strain Ly).